Here is a 206-residue protein sequence, read N- to C-terminus: dTTP/UTP pyrophosphatase (206 aa).

Asp-79 acts as the Proton acceptor in catalysis.

It belongs to the Maf family. YhdE subfamily. A divalent metal cation is required as a cofactor.

Its subcellular location is the cytoplasm. It catalyses the reaction dTTP + H2O = dTMP + diphosphate + H(+). The enzyme catalyses UTP + H2O = UMP + diphosphate + H(+). Nucleoside triphosphate pyrophosphatase that hydrolyzes dTTP and UTP. May have a dual role in cell division arrest and in preventing the incorporation of modified nucleotides into cellular nucleic acids. This Rhizobium meliloti (strain 1021) (Ensifer meliloti) protein is dTTP/UTP pyrophosphatase.